The following is a 535-amino-acid chain: Glucose-6-phosphate isomerase (535 aa).

Glu-359 serves as the catalytic Proton donor. Active-site residues include His-390 and Lys-505.

This sequence belongs to the GPI family.

Its subcellular location is the cytoplasm. The catalysed reaction is alpha-D-glucose 6-phosphate = beta-D-fructose 6-phosphate. It functions in the pathway carbohydrate biosynthesis; gluconeogenesis. The protein operates within carbohydrate degradation; glycolysis; D-glyceraldehyde 3-phosphate and glycerone phosphate from D-glucose: step 2/4. Catalyzes the reversible isomerization of glucose-6-phosphate to fructose-6-phosphate. This Treponema pallidum (strain Nichols) protein is Glucose-6-phosphate isomerase.